The primary structure comprises 349 residues: Interferon regulatory factor 2 (349 aa).

A DNA-binding region (IRF tryptophan pentad repeat) is located at residues 5–113 (RMRMRPWLEE…NAFRVYRMLP (109 aa)). K75 and K78 each carry N6-acetyllysine. A Glycyl lysine isopeptide (Lys-Gly) (interchain with G-Cter in SUMO); alternate cross-link involves residue K137. A Glycyl lysine isopeptide (Lys-Gly) (interchain with G-Cter in SUMO2); alternate cross-link involves residue K137. K166 is covalently cross-linked (Glycyl lysine isopeptide (Lys-Gly) (interchain with G-Cter in SUMO)). A Phosphoserine modification is found at S225. A compositionally biased stretch (polar residues) spans 230–239 (YAESETTDSV). Residues 230–253 (YAESETTDSVASDEENAEGRPHWR) form a disordered region. K260 is covalently cross-linked (Glycyl lysine isopeptide (Lys-Gly) (interchain with G-Cter in SUMO2)). A Glycyl lysine isopeptide (Lys-Gly) (interchain with G-Cter in SUMO) cross-link involves residue K293. The disordered stretch occupies residues 303 to 349 (SSWPPFTDLPLPAPVTPTPSSSRPDRETRASVIKKTSDITQARVKSC).

The protein belongs to the IRF family. In terms of assembly, interacts with BRD7, IRF2BP1 and IRF2BP2. Interacts with CREBBP in growing cells; the interaction acetylates IRF2 and regulates IRF2-dependent H4 promoter activity. Post-translationally, acetylated by CBP/ p300 during cell-growth. Acetylation on Lys-75 is required for stimulation of H4 promoter activity. In terms of processing, the major sites of sumoylation are Lys-137 and Lys-293. Sumoylation with SUMO1 increases its transcriptional repressor activity on IRF1 and diminishes its ability to activate ISRE and H4 promoter.

The protein resides in the nucleus. Its function is as follows. Specifically binds to the upstream regulatory region of type I IFN and IFN-inducible MHC class I genes (the interferon consensus sequence (ICS)) and represses those genes. Also acts as an activator for several genes including H4 and IL7. Constitutively binds to the ISRE promoter to activate IL7. Involved in cell cycle regulation through binding the site II (HiNF-M) promoter region of H4 and activating transcription during cell growth. Antagonizes IRF1 transcriptional activation. This Mus musculus (Mouse) protein is Interferon regulatory factor 2 (Irf2).